A 492-amino-acid chain; its full sequence is Catalase isozyme 1 (492 aa).

Catalysis depends on residues histidine 65 and asparagine 138. Tyrosine 348 is a binding site for heme.

The protein belongs to the catalase family. Homotetramer. It depends on heme as a cofactor. As to expression, high expression in seeds and early seedlings.

The protein resides in the glyoxysome. The enzyme catalyses 2 H2O2 = O2 + 2 H2O. Functionally, occurs in almost all aerobically respiring organisms and serves to protect cells from the toxic effects of hydrogen peroxide. In Cucurbita pepo (Vegetable marrow), this protein is Catalase isozyme 1 (CAT1).